The chain runs to 192 residues: GTP cyclohydrolase-2 (192 aa).

Residue 50–54 (RLHSE) coordinates GTP. Positions 55, 66, and 68 each coordinate Zn(2+). Residues 92-94 (EGR) and Thr114 each bind GTP. The active-site Proton acceptor is the Asp126. The Nucleophile role is filled by Arg128. Positions 149 and 154 each coordinate GTP.

Belongs to the GTP cyclohydrolase II family. Zn(2+) serves as cofactor.

It carries out the reaction GTP + 4 H2O = 2,5-diamino-6-hydroxy-4-(5-phosphoribosylamino)-pyrimidine + formate + 2 phosphate + 3 H(+). It functions in the pathway cofactor biosynthesis; riboflavin biosynthesis; 5-amino-6-(D-ribitylamino)uracil from GTP: step 1/4. In terms of biological role, catalyzes the conversion of GTP to 2,5-diamino-6-ribosylamino-4(3H)-pyrimidinone 5'-phosphate (DARP), formate and pyrophosphate. The sequence is that of GTP cyclohydrolase-2 from Helicobacter pylori (strain J99 / ATCC 700824) (Campylobacter pylori J99).